We begin with the raw amino-acid sequence, 3623 residues long: Cubilin (3623 aa).

The first 20 residues, 1–20 (MSSQFLWGFVTLLMIAELDG), serve as a signal peptide directing secretion. The propeptide at 21–32 (KTGKPEQRGQKR) is removed in mature form. An interaction with AMN region spans residues 39–46 (PRMTTEEG). Asn95 carries N-linked (GlcNAc...) asparagine glycosylation. The 37-residue stretch at 129-165 (ERKVCSSNPCLNGGTCVNLHDSFVCICPSQWKGLFCS) folds into the EGF-like 1 domain. 9 cysteine pairs are disulfide-bonded: Cys133–Cys144, Cys138–Cys153, Cys155–Cys164, Cys171–Cys187, Cys181–Cys196, Cys198–Cys207, Cys264–Cys277, Cys271–Cys286, and Cys289–Cys300. Residues 167-208 (DVNECVVYSGTPFGCQSGSTCVNTVGSFRCDCTPDTYGPQCA) form the EGF-like 2; calcium-binding domain. The region spanning 260–301 (DKDECSLQPSPCSEHAQCFNTQGSFYCGACPKGWQGNGYECQ) is the EGF-like 3; calcium-binding domain. The EGF-like 4; calcium-binding domain occupies 302 to 345 (DINECEINNGGCSQAPLVPCLNTPGSFSCGNCPAGFSGDGRVCT). EGF-like domains lie at 346-385 (PVDICSIHNGGCHPEATCSSSPVLGSFLPVCTCPPGYTGN) and 395-430 (LSNICSRHPCVNGQCIETVSSYFCKCDSGWSGQNCT). Intrachain disulfides connect Cys350-Cys363, Cys357-Cys376, Cys399-Cys409, Cys404-Cys418, Cys420-Cys429, Cys436-Cys447, Cys441-Cys456, Cys458-Cys467, Cys474-Cys500, Cys527-Cys549, Cys590-Cys616, Cys643-Cys665, and Cys708-Cys734. A glycan (N-linked (GlcNAc...) asparagine) is linked at Asn428. The region spanning 432 to 468 (NINDCSSNPCLNGGTCIDGINGFTCDCTSSWTGYYCQ) is the EGF-like 7; calcium-binding domain. CUB domains lie at 474-586 (CGGI…WEAK), 590-702 (CGGI…YLTT), 708-816 (CGGN…YQVA), 817-928 (CGGM…FSSD), 932-1042 (CGEV…YEAI), 1048-1161 (CLYD…WDGS), 1165-1277 (CGGN…FRQR), 1278-1389 (CDNV…WFTH), 1391-1506 (CGGE…WRAV), 1510-1619 (CGGI…FREE), 1620-1734 (CGGR…YSAS), 1738-1850 (CGGS…FKNI), 1852-1963 (GNNN…WFAV), 1978-2091 (CGGF…FHKS), 2092-2213 (CGGY…YEAK), 2217-2334 (CGGT…YSIA), 2336-2448 (CGGT…FKSS), 2452-2565 (CGGD…YTST), 2570-2687 (CGGF…YSFT), 2689-2801 (CGGI…WTTN), 2805-2919 (CGGT…FISR), 2920-3035 (CGRT…YRAI), 3037-3150 (CGGI…FRET), 3157-3274 (CGGY…YTFV), 3278-3393 (CGGT…YQIA), 3395-3507 (CNRE…WTSS), and 3511-3623 (CGGT…MWSS). N-linked (GlcNAc...) asparagine glycosylation is present at Asn491. 2 N-linked (GlcNAc...) asparagine glycosylation sites follow: Asn711 and Asn749. Residues Cys761 and Cys779 are joined by a disulfide bond. Residue Asn781 is glycosylated (N-linked (GlcNAc...) asparagine). A disulfide bond links Cys817 and Cys842. Asn857 is a glycosylation site (N-linked (GlcNAc...) asparagine). Cystine bridges form between Cys869–Cys891 and Cys932–Cys958. N-linked (GlcNAc...) asparagine glycosylation is present at Asn957. Glu980 serves as a coordination point for Ca(2+). The N-linked (GlcNAc...) asparagine glycan is linked to Asn984. Cysteines 985 and 1005 form a disulfide. The Ca(2+) site is built by Asp988, Asp1027, and Leu1030. The cysteines at positions 1048 and 1074 are disulfide-linked. Ca(2+) is bound by residues Glu1096, Asp1105, and Asp1146. A disulfide bridge links Cys1165 with Cys1191. An N-linked (GlcNAc...) asparagine glycan is attached at Asn1168. Positions 1213, 1221, 1262, 1264, and 1265 each coordinate Ca(2+). Cys1218 and Cys1240 are joined by a disulfide. Cys1278 and Cys1306 are disulfide-bonded. N-linked (GlcNAc...) asparagine glycans are attached at residues Asn1285, Asn1307, and Asn1319. Glu1328 lines the Ca(2+) pocket. A glycan (N-linked (GlcNAc...) asparagine) is linked at Asn1332. A disulfide bridge links Cys1333 with Cys1351. 3 residues coordinate Ca(2+): Asp1336, Asp1373, and Ile1375. 2 cysteine pairs are disulfide-bonded: Cys1391-Cys1417 and Cys1444-Cys1466. N-linked (GlcNAc...) asparagine glycosylation occurs at Asn1500. A disulfide bridge links Cys1510 with Cys1536. N-linked (GlcNAc...) asparagine glycans are attached at residues Asn1551, Asn1646, and Asn1671. Cys1620 and Cys1647 are joined by a disulfide. 3 disulfides stabilise this stretch: Cys1675/Cys1697, Cys1738/Cys1764, and Cys1791/Cys1812. 2 N-linked (GlcNAc...) asparagine glycosylation sites follow: Asn1802 and Asn1819. Disulfide bonds link Cys1905–Cys1927, Cys1978–Cys2006, and Cys2032–Cys2054. 2 N-linked (GlcNAc...) asparagine glycosylation sites follow: Asn2085 and Asn2117. Intrachain disulfides connect Cys2092/Cys2118 and Cys2217/Cys2247. Residue Asn2274 is glycosylated (N-linked (GlcNAc...) asparagine). Intrachain disulfides connect Cys2275/Cys2297, Cys2336/Cys2363, Cys2390/Cys2411, Cys2452/Cys2478, and Cys2505/Cys2527. N-linked (GlcNAc...) asparagine glycosylation is present at Asn2400. 3 N-linked (GlcNAc...) asparagine glycosylation sites follow: Asn2531, Asn2581, and Asn2610. Cys2570 and Cys2599 are disulfide-bonded. 7 cysteine pairs are disulfide-bonded: Cys2628–Cys2649, Cys2689–Cys2715, Cys2742–Cys2764, Cys2805–Cys2831, Cys2860–Cys2883, Cys2920–Cys2946, and Cys2977–Cys2999. Asn2813, Asn2875, Asn2945, and Asn2989 each carry an N-linked (GlcNAc...) asparagine glycan. At Thr3008 the chain carries Phosphothreonine. Disulfide bonds link Cys3037-Cys3064 and Cys3091-Cys3113. Asn3042, Asn3106, Asn3125, and Asn3165 each carry an N-linked (GlcNAc...) asparagine glycan. 2 cysteine pairs are disulfide-bonded: Cys3157/Cys3185 and Cys3215/Cys3237. 3 N-linked (GlcNAc...) asparagine glycosylation sites follow: Asn3268, Asn3283, and Asn3290. Cystine bridges form between Cys3278/Cys3306 and Cys3332/Cys3354. 3 N-linked (GlcNAc...) asparagine glycosylation sites follow: Asn3357, Asn3400, and Asn3430. Cys3395 and Cys3421 are disulfide-bonded. Intrachain disulfides connect Cys3448–Cys3470, Cys3511–Cys3537, and Cys3564–Cys3586. N-linked (GlcNAc...) asparagine glycosylation occurs at Asn3533.

In terms of assembly, interacts with AMN. Component of the cubam complex composed of one CUBN trimer and one AMN chain. The cubam complex can dimerize. Interacts with LRP2 in a dual-receptor complex in a calcium-dependent manner. Found in a complex with PID1/PCLI1, LRP1 and CUBNI. Interacts with LRP1 and PID1/PCLI1. In terms of processing, the precursor is cleaved by a trans-Golgi proteinase furin, removing a propeptide. N-glycosylated. Expressed to intestinal, renal and yalk sac apical membranes. In kidney, expressed in the proximal tubule.

Its subcellular location is the cell membrane. It is found in the endosome membrane. The protein localises to the lysosome membrane. Its function is as follows. Endocytic receptor which plays a role in lipoprotein, vitamin and iron metabolism by facilitating their uptake. Acts together with LRP2 to mediate endocytosis of high-density lipoproteins, GC, hemoglobin, ALB, TF and SCGB1A1. Acts together with AMN to mediate endocytosis of the CBLIF-cobalamin complex. Binds to ALB, MB, Kappa and lambda-light chains, TF, hemoglobin, GC, SCGB1A1, APOA1, high density lipoprotein, and the CBLIF-cobalamin complex. Ligand binding requires calcium. Serves as important transporter in several absorptive epithelia, including intestine, renal proximal tubules and embryonic yolk sac. May play an important role in the development of the peri-implantation embryo through internalization of APOA1 and cholesterol. Binds to LGALS3 at the maternal-fetal interface. The polypeptide is Cubilin (Cubn) (Rattus norvegicus (Rat)).